Here is a 105-residue protein sequence, read N- to C-terminus: Heat shock protein HspQ (105 aa).

The protein belongs to the HspQ family.

Its subcellular location is the cytoplasm. Its function is as follows. Involved in the degradation of certain denaturated proteins, including DnaA, during heat shock stress. This chain is Heat shock protein HspQ, found in Salmonella choleraesuis (strain SC-B67).